The sequence spans 295 residues: Acetyl-coenzyme A carboxylase carboxyl transferase subunit beta (295 aa).

Residues Met-1–Lys-20 form a disordered region. A CoA carboxyltransferase N-terminal domain is found at Leu-28–Ala-295. 4 residues coordinate Zn(2+): Cys-32, Cys-35, Cys-51, and Cys-54. The segment at Cys-32–Cys-54 adopts a C4-type zinc-finger fold.

It belongs to the AccD/PCCB family. Acetyl-CoA carboxylase is a heterohexamer composed of biotin carboxyl carrier protein (AccB), biotin carboxylase (AccC) and two subunits each of ACCase subunit alpha (AccA) and ACCase subunit beta (AccD). The cofactor is Zn(2+).

The protein localises to the cytoplasm. It carries out the reaction N(6)-carboxybiotinyl-L-lysyl-[protein] + acetyl-CoA = N(6)-biotinyl-L-lysyl-[protein] + malonyl-CoA. It functions in the pathway lipid metabolism; malonyl-CoA biosynthesis; malonyl-CoA from acetyl-CoA: step 1/1. In terms of biological role, component of the acetyl coenzyme A carboxylase (ACC) complex. Biotin carboxylase (BC) catalyzes the carboxylation of biotin on its carrier protein (BCCP) and then the CO(2) group is transferred by the transcarboxylase to acetyl-CoA to form malonyl-CoA. The chain is Acetyl-coenzyme A carboxylase carboxyl transferase subunit beta from Xanthomonas oryzae pv. oryzae (strain MAFF 311018).